Here is a 42-residue protein sequence, read N- to C-terminus: Photosystem II reaction center protein J (42 aa).

Residues 12-32 (LWFVGMIVGLAALGLLGIFFY) form a helical membrane-spanning segment.

It belongs to the PsbJ family. As to quaternary structure, PSII is composed of 1 copy each of membrane proteins PsbA, PsbB, PsbC, PsbD, PsbE, PsbF, PsbH, PsbI, PsbJ, PsbK, PsbL, PsbM, PsbT, PsbX, PsbY, PsbZ, Psb30/Ycf12, at least 3 peripheral proteins of the oxygen-evolving complex and a large number of cofactors. It forms dimeric complexes.

It is found in the plastid. Its subcellular location is the chloroplast thylakoid membrane. One of the components of the core complex of photosystem II (PSII). PSII is a light-driven water:plastoquinone oxidoreductase that uses light energy to abstract electrons from H(2)O, generating O(2) and a proton gradient subsequently used for ATP formation. It consists of a core antenna complex that captures photons, and an electron transfer chain that converts photonic excitation into a charge separation. In Nephroselmis olivacea (Green alga), this protein is Photosystem II reaction center protein J.